We begin with the raw amino-acid sequence, 884 residues long: Androgen receptor (884 aa).

The tract at residues 1-522 (MEVQLGLGRV…PIDYYFPPQK (522 aa)) is modulating. Residues 1-551 (MEVQLGLGRV…GSCKVFFKRA (551 aa)) form an interaction with ZNF318 region. 2 disordered regions span residues 33–145 (VIQN…TLSL) and 174–207 (QQQQQEAVSEGSSSGRAREAAGAPTSSKDSYLGG). Composition is skewed to low complexity over residues 55–79 (QQQQETSPPQQQQQQQGEDGSPQAQ) and 174–196 (QQQQQEAVSEGSSSGRAREAAGA). Residue Ser-61 is modified to Phosphoserine; by CDK9. Ser-75 is subject to Phosphoserine. The segment covering 197-207 (PTSSKDSYLGG) has biased composition (polar residues). Position 204 is a phosphotyrosine; by CSK (Tyr-204). Ser-237 carries the phosphoserine modification. Phosphotyrosine; by CSK and TNK2 is present on Tyr-248. The tract at residues 275–294 (DDSADKGTEEPAEYTPFKGS) is disordered. Phosphotyrosine; by CSK is present on residues Tyr-288, Tyr-327, Tyr-338, and Tyr-343. The residue at position 344 (Tyr-344) is a Phosphotyrosine; by CSK and TNK2. Residue Lys-367 forms a Glycyl lysine isopeptide (Lys-Gly) (interchain with G-Cter in SUMO) linkage. At Tyr-374 the chain carries Phosphotyrosine; by CSK. Lys-485 participates in a covalent cross-link: Glycyl lysine isopeptide (Lys-Gly) (interchain with G-Cter in SUMO). 2 positions are modified to phosphotyrosine; by CSK: Tyr-499 and Tyr-516. The tract at residues 516–883 (YYFPPQKTCL…GKVKPIYFHT (368 aa)) is interaction with LPXN. Residues 523–596 (TCLICGDEAS…AGMTLGARKL (74 aa)) constitute a DNA-binding region (nuclear receptor). 2 consecutive NR C4-type zinc fingers follow at residues 524–544 (CLICGDEASGCHYGALTCGSC) and 560–584 (CASRNDCTIDKFRRKNCPSCRLRKC). Residues 536–626 (YGALTCGSCK…TEESSQKLTV (91 aa)) are interaction with HIPK3. The interval 556-883 (QKYLCASRND…GKVKPIYFHT (328 aa)) is interaction with CCAR1. The tract at residues 589–883 (MTLGARKLKK…GKVKPIYFHT (295 aa)) is interaction with KAT7. At Ser-615 the chain carries Phosphoserine; by STK4/MST1. The NR LBD domain maps to 633 to 864 (ECQPIFLNVL…DFPEMMAEII (232 aa)). The 17beta-hydroxy-5alpha-androstan-3-one site is built by Asn-670 and Arg-717. Residues Lys-810 and Lys-812 each participate in a glycyl lysine isopeptide (Lys-Gly) (interchain with G-Cter in ubiquitin) cross-link. Thr-842 contacts 17beta-hydroxy-5alpha-androstan-3-one. Position 880 is a phosphotyrosine; by CSK (Tyr-880).

The protein belongs to the nuclear hormone receptor family. NR3 subfamily. As to quaternary structure, binds DNA as a homodimer. Part of a ternary complex containing AR, EFCAB6/DJBP and PARK7. Interacts with HIPK3 and NR0B2 in the presence of androgen. The ligand binding domain interacts with KAT7/HBO1 in the presence of dihydrotestosterone. Interacts with EFCAB6/DJBP, PQBP1, RANBP9, RBAK, SPDEF, SRA1, TGFB1I1 and RREB1. Interacts with ZMIZ1/ZIMP10 and ZMIZ2/ZMIP7 which both enhance its transactivation activity. Interacts with SLC30A9 and RAD54L2/ARIP4. Interacts with MACROD1 (via macro domain). Interacts via the ligand-binding domain with LXXLL and FXXLF motifs from NCOA1, NCOA2, NCOA3 and MAGEA11. Interacts (via nuclear receptor DNA binding domain and nuclear receptor ligand binding domain) with NCOA4. The AR N-terminal poly-Gln region binds Ran resulting in enhancement of AR-mediated transactivation. Ran-binding decreases as the poly-Gln length increases. Interacts with HIP1 (via coiled coil domain). Interacts (via ligand-binding domain) with TRIM68. Interacts with TNK2. Interacts with USP26. Interacts with RNF6. Interacts (regulated by RNF6 probably through polyubiquitination) with RNF14; regulates AR transcriptional activity. Interacts with PRMT2 and TRIM24. Interacts with RACK1. Interacts with RANBP10; this interaction enhances dihydrotestosterone-induced AR transcriptional activity. Interacts with PRPF6 in a hormone-independent way; this interaction enhances dihydrotestosterone-induced AR transcriptional activity. Interacts with STK4/MST1. Interacts with ZIPK/DAPK3. Interacts with LPXN. Interacts with MAK. Part of a complex containing AR, MAK and NCOA3. Interacts with CRY1. Interacts with CCAR1 and GATA2. Interacts with ZNF318. Interacts with BUD31. Interacts with ARID4A. Interacts with ARID4B. Interacts (via NR LBD domain) with ZBTB7A; the interaction is direct and androgen-dependent. Interacts with NCOR1. Interacts with NCOR2. Interacts with CRY2 in a ligand-dependent manner. Phosphorylated in prostate cancer cells in response to several growth factors including EGF. Phosphorylation is induced by c-Src kinase (CSK). Tyr-499 is one of the major phosphorylation sites and an increase in phosphorylation and Src kinase activity is associated with prostate cancer progression. Phosphorylation by TNK2 enhances the DNA-binding and transcriptional activity. Phosphorylation at Ser-61 by CDK9 regulates AR promoter selectivity and cell growth. In terms of processing, sumoylated on Lys-367 (major) and Lys-485. Ubiquitinated. Deubiquitinated by USP26. 'Lys-6' and 'Lys-27'-linked polyubiquitination by RNF6 modulates AR transcriptional activity and specificity. Post-translationally, palmitoylated by ZDHHC7 and ZDHHC21. Palmitoylation is required for plasma membrane targeting and for rapid intracellular signaling via ERK and AKT kinases and cAMP generation.

It is found in the nucleus. The protein resides in the cytoplasm. Steroid hormone receptors are ligand-activated transcription factors that regulate eukaryotic gene expression and affect cellular proliferation and differentiation in target tissues. Transcription factor activity is modulated by bound coactivator and corepressor proteins like ZBTB7A that recruits NCOR1 and NCOR2 to the androgen response elements/ARE on target genes, negatively regulating androgen receptor signaling and androgen-induced cell proliferation. Transcription activation is also down-regulated by NR0B2. Activated, but not phosphorylated, by HIPK3 and ZIPK/DAPK3. This Eulemur fulvus collaris (Collared brown lemur) protein is Androgen receptor (AR).